We begin with the raw amino-acid sequence, 370 residues long: Gap junction delta-4 protein (370 aa).

The Cytoplasmic segment spans residues 1–19 (MEGVDLLGFLIITLNCNVT). The helical transmembrane segment at 20-40 (MXGKLWFVLTMLLRMLVIVLA) threads the bilayer. Residues 41 to 76 (GRPVYQDEQERFVCNTLQPGCANVCYDVFSPVSHLR) lie on the Extracellular side of the membrane. A helical membrane pass occupies residues 77-97 (FWLIQGVCVLLPSAVFSVYVL). Over 98-146 (HRGATLAALGPRRCPEPRDTASGQRRCPGSCRERGGLEVPDFSAGYIIH) the chain is Cytoplasmic. A helical membrane pass occupies residues 147–167 (LLLRTLLEAAFGALNYLLFGF). Topologically, residues 168–196 (LAPNKFPCTRPPCTGVVDCYVSRPTEKSL) are extracellular. The helical transmembrane segment at 197–217 (LMLFLWAVSALSFLLGLADLV) threads the bilayer. At 218–370 (CSLRRLMRRR…HLRARKSEWV (153 aa)) the chain is on the cytoplasmic side. The disordered stretch occupies residues 227–370 (RPGPPTSPSI…HLRARKSEWV (144 aa)). Residues 246–260 (PEGRPTDKEGGREQE) show a composition bias toward basic and acidic residues. A compositionally biased stretch (low complexity) spans 331-345 (PSAAPSHLAAHPSCS).

The protein belongs to the connexin family. Delta-type subfamily. As to quaternary structure, a connexon is composed of a hexamer of connexins.

It is found in the cell membrane. The protein localises to the cell junction. Its subcellular location is the gap junction. Its function is as follows. One gap junction consists of a cluster of closely packed pairs of transmembrane channels, the connexons, through which materials of low MW diffuse from one cell to a neighboring cell. This chain is Gap junction delta-4 protein (GJD4), found in Macaca fascicularis (Crab-eating macaque).